A 323-amino-acid chain; its full sequence is Fructose-1,6-bisphosphatase class 1 (323 aa).

Glutamate 93, aspartate 114, leucine 116, and aspartate 117 together coordinate Mg(2+). Substrate contacts are provided by residues 117–120 (DGSS), asparagine 205, tyrosine 233, and lysine 263. Glutamate 269 contacts Mg(2+).

It belongs to the FBPase class 1 family. As to quaternary structure, homotetramer. Mg(2+) is required as a cofactor.

Its subcellular location is the cytoplasm. It carries out the reaction beta-D-fructose 1,6-bisphosphate + H2O = beta-D-fructose 6-phosphate + phosphate. The protein operates within carbohydrate biosynthesis; gluconeogenesis. This is Fructose-1,6-bisphosphatase class 1 from Sulfurihydrogenibium sp. (strain YO3AOP1).